Here is a 1166-residue protein sequence, read N- to C-terminus: Reverse gyrase (1166 aa).

The RG N-terminal-type zinc-finger motif lies at 1–40 (MINVMYKNSCPNCGGDISADRLLNGLPCETCLPYINGIDG). Zn(2+) is bound by residues C10, C13, C28, and C31. ATP contacts are provided by residues Q92 and 109–116 (APTGLGKT). In terms of domain architecture, Helicase ATP-binding spans 96 to 285 (LRRLVSNQSF…ALRLLTGFEP (190 aa)). A DEAD box motif is present at residues 190-193 (DDAD). The tract at residues 576 to 1166 (FNISTGLLIV…VNPLKSEQNV (591 aa)) is topoisomerase I. The Toprim domain occupies 580 to 743 (TGLLIVESPT…NIYRITYHEI (164 aa)). Residue E586 participates in Mg(2+) binding. The RG C-terminal-type zinc finger occupies 662 to 689 (IKKCLDCNKTFSIASDKCPYCGSTNVQT). Positions 665, 668, 679, and 682 each coordinate Zn(2+). D712 contributes to the Mg(2+) binding site. The region spanning 759 to 1157 (NTNLVMSQIV…EIFSEISTLV (399 aa)) is the Topo IA-type catalytic domain. The active-site O-(5'-phospho-DNA)-tyrosine intermediate is the Y903.

It in the N-terminal section; belongs to the DEAD box helicase family. DDVD subfamily. In the C-terminal section; belongs to the type IA topoisomerase family. In terms of assembly, monomer. Zn(2+) serves as cofactor. The cofactor is Mg(2+).

The protein localises to the cytoplasm. It catalyses the reaction ATP + H2O = ADP + phosphate + H(+). With respect to regulation, inhibited by UV light-induced lesions; substrate is completely cleaved but a nicked form accumulates, suggesting the reaction is blocked between the cleavage and ligation steps. Inhibited by actinomycin D; substrate DNA remains negatively supercoiled in this case. Activity is stimulated by SSB from S.solfataricus strain P2. Positive supercoiling is inhibited by Sul7d (also called Sso7d) from S.solfataricus strain MT4; SSB from S.solfataricus strain P2 relieves this inhibition. In terms of biological role, modifies the topological state of DNA by introducing positive supercoils in an ATP-dependent process. Increases the linking number in steps of +1. In vitro requires high concentrations to supercoil negatively supercoiled DNA, relaxes plasmid DNA first; DNA single-strand binding protein (SSB) from S.solfataricus strain P2 stimulates positive supercoiling. SSB stimulates DNA-binding by reverse gyrase, and thus all subsequent steps. Binds to single-stranded DNA, transiently cleaves and then rejoins the ends, introducing a positive supercoil in the process. The scissile phosphodiester is attacked by the catalytic tyrosine of the enzyme, resulting in the formation of a DNA-(5'-phosphotyrosyl)-enzyme intermediate. May be involved in DNA damage response. Probably involved in rewinding DNA strands in regions of the chromosome that have opened up to allow replication, transcription, DNA repair and/or for DNA protection. The chain is Reverse gyrase from Saccharolobus shibatae (strain ATCC 51178 / DSM 5389 / JCM 8931 / NBRC 15437 / B12) (Sulfolobus shibatae).